Consider the following 342-residue polypeptide: Oxygen-dependent coproporphyrinogen-III oxidase (342 aa).

A substrate-binding site is contributed by serine 98. 2 residues coordinate a divalent metal cation: histidine 102 and histidine 112. Histidine 112 acts as the Proton donor in catalysis. A substrate-binding site is contributed by 114–116 (NYR). A divalent metal cation is bound by residues histidine 146 and histidine 176. An important for dimerization region spans residues 266-301 (YVEFNLVWDRGTIFGLQTNGRTESILMSLPPLARWE).

It belongs to the aerobic coproporphyrinogen-III oxidase family. Homodimer. The cofactor is a divalent metal cation.

It is found in the cytoplasm. The catalysed reaction is coproporphyrinogen III + O2 + 2 H(+) = protoporphyrinogen IX + 2 CO2 + 2 H2O. It functions in the pathway porphyrin-containing compound metabolism; protoporphyrin-IX biosynthesis; protoporphyrinogen-IX from coproporphyrinogen-III (O2 route): step 1/1. Functionally, involved in the heme and chlorophyll biosynthesis. Catalyzes the aerobic oxidative decarboxylation of propionate groups of rings A and B of coproporphyrinogen-III to yield the vinyl groups in protoporphyrinogen-IX. In Prochlorococcus marinus (strain MIT 9312), this protein is Oxygen-dependent coproporphyrinogen-III oxidase.